A 1024-amino-acid chain; its full sequence is Beta-galactosidase (1024 aa).

Residues Asn-103 and Asp-202 each contribute to the substrate site. Asp-202 is a Na(+) binding site. Glu-417, His-419, and Glu-462 together coordinate Mg(2+). Substrate-binding positions include Glu-462 and 538–541; that span reads EYAH. Glu-462 acts as the Proton donor in catalysis. The active-site Nucleophile is Glu-538. Residue Asn-598 participates in Mg(2+) binding. Positions 602 and 605 each coordinate Na(+). Positions 605 and 1000 each coordinate substrate.

It belongs to the glycosyl hydrolase 2 family. In terms of assembly, homotetramer. Requires Mg(2+) as cofactor. Mn(2+) is required as a cofactor. It depends on Na(+) as a cofactor.

The enzyme catalyses Hydrolysis of terminal non-reducing beta-D-galactose residues in beta-D-galactosides.. Inhibited by phenylethyl thio-beta-D-galactoside (PETG), isopropyl thio-beta-D-galactoside (IPTG), L-ribose, D-galactonolactone, lactose and 2-amino-D-galactose. This is Beta-galactosidase (lacZ) from Escherichia coli (strain K12).